The following is a 65-amino-acid chain: Conotoxin VnMLCL-031 (65 aa).

Residues 1 to 19 (MLCLPXFIILLLLASPAAP) form the signal peptide. A propeptide spanning residues 20 to 43 (NPLQTRXQSNLIRAGPEDANIKTX) is cleaved from the precursor. Position 64 is an isoleucine amide (isoleucine 64).

This sequence belongs to the conotoxin T superfamily. As to expression, expressed by the venom duct.

The protein localises to the secreted. This Conus ventricosus (Mediterranean cone) protein is Conotoxin VnMLCL-031.